Reading from the N-terminus, the 348-residue chain is Methylthioribose-1-phosphate isomerase (348 aa).

Substrate is bound by residues 51–53 (RGA), R94, and Q199. Residue D240 is the Proton donor of the active site. 250 to 251 (NK) is a substrate binding site.

The protein belongs to the eIF-2B alpha/beta/delta subunits family. MtnA subfamily.

It catalyses the reaction 5-(methylsulfanyl)-alpha-D-ribose 1-phosphate = 5-(methylsulfanyl)-D-ribulose 1-phosphate. The protein operates within amino-acid biosynthesis; L-methionine biosynthesis via salvage pathway; L-methionine from S-methyl-5-thio-alpha-D-ribose 1-phosphate: step 1/6. In terms of biological role, catalyzes the interconversion of methylthioribose-1-phosphate (MTR-1-P) into methylthioribulose-1-phosphate (MTRu-1-P). This chain is Methylthioribose-1-phosphate isomerase, found in Nitrosococcus oceani (strain ATCC 19707 / BCRC 17464 / JCM 30415 / NCIMB 11848 / C-107).